The primary structure comprises 325 residues: NADH-quinone oxidoreductase subunit H (325 aa).

9 consecutive transmembrane segments (helical) span residues 11-31, 50-69, 81-101, 114-134, 154-174, 186-206, 237-257, 265-285, and 304-324; these read ILLS…CGAF, NRVG…KMFF, VIFT…FAIV, IGIL…LFAG, VSYE…AGSF, LWNV…GVAV, FFVG…TLFF, LPPF…FILI, and VCLP…LWQA.

It belongs to the complex I subunit 1 family. NDH-1 is composed of 13 different subunits. Subunits NuoA, H, J, K, L, M, N constitute the membrane sector of the complex.

It localises to the cell inner membrane. The enzyme catalyses a quinone + NADH + 5 H(+)(in) = a quinol + NAD(+) + 4 H(+)(out). In terms of biological role, NDH-1 shuttles electrons from NADH, via FMN and iron-sulfur (Fe-S) centers, to quinones in the respiratory chain. The immediate electron acceptor for the enzyme in this species is believed to be ubiquinone. Couples the redox reaction to proton translocation (for every two electrons transferred, four hydrogen ions are translocated across the cytoplasmic membrane), and thus conserves the redox energy in a proton gradient. This subunit may bind ubiquinone. This chain is NADH-quinone oxidoreductase subunit H, found in Salmonella agona (strain SL483).